A 934-amino-acid polypeptide reads, in one-letter code: Protein translocase subunit SecA (934 aa).

Residues Gln87, 105 to 109, and Asp515 each bind ATP; that span reads GEGKT. Zn(2+)-binding residues include Cys918, Cys920, Cys929, and His930.

It belongs to the SecA family. Monomer and homodimer. Part of the essential Sec protein translocation apparatus which comprises SecA, SecYEG and auxiliary proteins SecDF-YajC and YidC. It depends on Zn(2+) as a cofactor.

It is found in the cell inner membrane. Its subcellular location is the cytoplasm. The catalysed reaction is ATP + H2O + cellular proteinSide 1 = ADP + phosphate + cellular proteinSide 2.. In terms of biological role, part of the Sec protein translocase complex. Interacts with the SecYEG preprotein conducting channel. Has a central role in coupling the hydrolysis of ATP to the transfer of proteins into and across the cell membrane, serving both as a receptor for the preprotein-SecB complex and as an ATP-driven molecular motor driving the stepwise translocation of polypeptide chains across the membrane. The sequence is that of Protein translocase subunit SecA from Ralstonia pickettii (strain 12J).